A 298-amino-acid polypeptide reads, in one-letter code: MRILPLSSDSMGARSMATFVETKDLRIMIDPGVALGPSRYGLPPHPKEWERMEAHWREIVRQAHKADLLIVTHYHYDHHNPWEGLEIYEGKRVLVKDPKRNINQSQRGRASFFLKQIEGIANVEIADGRSFREGDTIIEFSEPVFHGTNSKLGYVIEVFIREGEDSFLFTSDVEGPSLDDQARFVLEKKPKVVMVDGPMTYMLGYRYSRASLDASIRNLSSILDAVETLVIDHHLLRDLEWSKRIESVLNKGREVKKKVITSNELVDKPLEMLEAKRKELYELYPVDESEMREWKFED.

This sequence belongs to the UPF0282 family.

The polypeptide is UPF0282 protein Kcr_0286 (Korarchaeum cryptofilum (strain OPF8)).